A 153-amino-acid chain; its full sequence is Large ribosomal subunit protein uL23m (153 aa).

The disordered stretch occupies residues 110-153 (IFPEKDKKSKEGSVEEMHEKFMEDERQRQKPDPRRGGVTEWFGL). A compositionally biased stretch (basic and acidic residues) spans 111 to 146 (FPEKDKKSKEGSVEEMHEKFMEDERQRQKPDPRRGG).

The protein belongs to the universal ribosomal protein uL23 family. In terms of assembly, component of the mitochondrial ribosome large subunit (39S) which comprises a 16S rRNA and about 50 distinct proteins.

Its subcellular location is the mitochondrion. This is Large ribosomal subunit protein uL23m (mrpl23) from Danio rerio (Zebrafish).